Here is a 723-residue protein sequence, read N- to C-terminus: Malonamoyl-CoA synthetase vrtB (723 aa).

Belongs to the ATP-dependent AMP-binding enzyme family.

It functions in the pathway secondary metabolite biosynthesis; terpenoid biosynthesis. Malonamoyl-CoA synthetase; part of the gene cluster that mediates the biosynthesis of viridicatumtoxin, a tetracycline-like fungal meroterpenoid with a unique, fused spirobicyclic ring system. The first step of the pathway is the production of the malonamoyl-CoA starter unit for the polyketide synthase vrtA. The aldolase vrtJ may be involved in the synthesis of the malonamate substrate for malonamoyl-CoA synthetase vrtB. The polyketide synthase vrtA then may utilize the malonamoyl-CoA starter unit, followed by sequential condensation of eight malonyl-CoA units to form the polyketide backbone. The cyclization of the last ring could be mediated by the lactamase-like protein vrtG. The proposed post-PKS tailoring steps are a hydroxylation at C5 catalyzed the cytochrome P450 monooxygenase vrtE, a hydroxylation at C12a catalyzed by VrtH and/or VrtI, and an O-methylation by the O-methyltransferase vrtF. VrtC is then proposed to catalyze the transfer of a geranyl group synthesized by vrtD to the aromatic C ring of the tetracyclic polyketide intermediate of viridicatumtoxin to yield previridicatumtoxin. Finally, the cytochrome P450 monooxygenase vrtK catalyzes the spirocyclization of the geranyl moiety of previridicatumtoxin to afford viridicatumtoxin. This is Malonamoyl-CoA synthetase vrtB from Penicillium aethiopicum.